We begin with the raw amino-acid sequence, 548 residues long: Peptidyl-prolyl isomerase CWC27 (548 aa).

Residues 11–193 (PTASVIIHTT…YPVKIERIEI (183 aa)) enclose the PPIase cyclophilin-type domain. 2 disordered regions span residues 204-436 (RSRV…GDEE) and 504-548 (TLKD…RGAK). Basic and acidic residues-rich tracts occupy residues 328–340 (EAPR…RANE), 353–366 (IHSE…KKSA), 406–428 (RLEK…KDGE), and 504–516 (TLKD…RDAR).

Belongs to the cyclophilin-type PPIase family. CWC27 subfamily. Associated with the spliceosome.

It is found in the cytoplasm. The protein resides in the nucleus. The enzyme catalyses [protein]-peptidylproline (omega=180) = [protein]-peptidylproline (omega=0). In terms of biological role, PPIases accelerate the folding of proteins. It catalyzes the cis-trans isomerization of proline imidic peptide bonds in oligopeptides. Involved in pre-mRNA splicing. The sequence is that of Peptidyl-prolyl isomerase CWC27 (CWC27) from Gibberella zeae (strain ATCC MYA-4620 / CBS 123657 / FGSC 9075 / NRRL 31084 / PH-1) (Wheat head blight fungus).